We begin with the raw amino-acid sequence, 900 residues long: Phospholipase DDHD1 (900 aa).

Disordered stretches follow at residues 1-28 (MNYP…ELGS), 100-152 (LRYY…GGPA), and 202-233 (GARP…DEDR). Residues serine 8 and serine 11 each carry the phosphoserine modification. The span at 130-140 (SGGGGATGGSP) shows a compositional bias: gly residues. Serine 537 is an active-site residue. The DDHD domain maps to 611-886 (LKFKVENFFC…ALFLLTFMYK (276 aa)). Disordered regions lie at residues 706–725 (AKEP…PSPV) and 768–801 (SSTT…TQTL). Over residues 710 to 725 (TSVSENEGISTIPSPV) the composition is skewed to polar residues. Serine 723 bears the Phosphoserine mark. Residues 776 to 787 (TSKDSMEDEKKP) are compositionally biased toward basic and acidic residues. Residues 791–801 (PSATTVGTQTL) are compositionally biased toward polar residues.

The protein belongs to the PA-PLA1 family. As to quaternary structure, forms homooligomers and, to a much smaller extent, heterooligomers with DDHD2. In terms of tissue distribution, highly expressed in testis. Also expressed in brain, spleen and lung. Only expressed in cerebellum in fetal brain.

It localises to the cytoplasm. It carries out the reaction a 1,2-diacyl-sn-glycero-3-phosphate + H2O = a 2-acyl-sn-glycerol 3-phosphate + a fatty acid + H(+). It catalyses the reaction a 1,2-diacyl-sn-glycero-3-phospho-(1D-myo-inositol) + H2O = a 2-acyl-sn-glycero-3-phospho-D-myo-inositol + a fatty acid + H(+). The catalysed reaction is 1-octadecanoyl-2-(5Z,8Z,11Z,14Z-eicosatetraenoyl)-sn-glycero-3-phospho-(1D-myo-inositol) + H2O = 2-(5Z,8Z,11Z,14Z-eicosatetraenoyl)-sn-glycero-3-phospho-(1D-myo-inositol) + octadecanoate + H(+). The enzyme catalyses a 1-acyl-2-(5Z,8Z,11Z,14Z-eicosatetraenoyl)-sn-glycero-3-phospho-(1D-myo-inositol) + H2O = 2-(5Z,8Z,11Z,14Z-eicosatetraenoyl)-sn-glycero-3-phospho-(1D-myo-inositol) + a fatty acid + H(+). It carries out the reaction 1,2-dihexadecanoyl-sn-glycero-3-phospho-(1D-myo-inositol) + H2O = 2-hexadecanoyl-sn-glycero-3-phospho-(1D-myo-inositol) + hexadecanoate + H(+). It catalyses the reaction a 1-acyl-2-(5Z,8Z,11Z,14Z)-eicosatetraenoyl-sn-glycero-3-phosphate + H2O = 2-(5Z,8Z,11Z,14Z-eicosatetraenoyl)-sn-glycero-3-phosphate + a fatty acid + H(+). The catalysed reaction is 1,2-di-(9Z-octadecenoyl)-sn-glycero-3-phosphate + H2O = 2-(9Z-octadecenoyl)-sn-glycero-3-phosphate + (9Z)-octadecenoate + H(+). The enzyme catalyses 1-hexadecanoyl-2-(9Z-octadecenoyl)-sn-glycero-3-phosphate + H2O = 2-(9Z-octadecenoyl)-sn-glycero-3-phosphate + hexadecanoate + H(+). It carries out the reaction 1-hexadecanoyl-2-(9Z-octadecenoyl)-sn-glycero-3-phospho-L-serine + H2O = 2-(9Z-octadecenoyl)-sn-glycero-3-phospho-L-serine + hexadecanoate + H(+). It catalyses the reaction 1,2-di-(5Z,8Z,11Z,14Z)-eicosatetraenoyl-sn-glycero-3-phosphate + H2O = 2-(5Z,8Z,11Z,14Z-eicosatetraenoyl)-sn-glycero-3-phosphate + (5Z,8Z,11Z,14Z)-eicosatetraenoate + H(+). The catalysed reaction is 1-octadecanoyl-2-(5Z,8Z,11Z,14Z-eicosatetraenoyl)-sn-glycero-3-phosphate + H2O = 2-(5Z,8Z,11Z,14Z-eicosatetraenoyl)-sn-glycero-3-phosphate + octadecanoate + H(+). The enzyme catalyses a 1,2-diacyl-sn-glycero-3-phosphocholine + H2O = a 2-acyl-sn-glycero-3-phosphocholine + a fatty acid + H(+). It carries out the reaction a 1,2-diacyl-sn-glycero-3-phosphoethanolamine + H2O = a 2-acyl-sn-glycero-3-phosphoethanolamine + a fatty acid + H(+). It catalyses the reaction a 1,2-diacyl-sn-glycero-3-phospho-L-serine + H2O = a 2-acyl-sn-glycero-3-phospho-L-serine + a fatty acid + H(+). The catalysed reaction is a 1,2-diacyl-sn-glycero-3-phospho-(1'-sn-glycerol) + H2O = 2-acyl-sn-glycero-3-phospho-(1'-sn-glycerol) + a fatty acid + H(+). The enzyme catalyses 1-hexadecanoyl-2-(9Z-octadecenoyl)-sn-glycero-3-phospho-(1'-sn-glycerol) + H2O = 2-(9Z-octadecenoyl)-sn-glycero-3-phospho-(1'-sn-glycerol) + hexadecanoate + H(+). It carries out the reaction 1-acyl-2-(5Z,8Z,11Z,14Z-eicosatetraenoyl)-sn-glycero-3-phosphocholine + H2O = 2-(5Z,8Z,11Z,14Z)-eicosatetraenoyl-sn-glycero-3-phosphocholine + a fatty acid + H(+). It catalyses the reaction 1-acyl-2-(5Z,8Z,11Z,14Z)-eicosatetraenoyl-sn-glycero-3-phosphoethanolamine + H2O = 2-(5Z,8Z,11Z,14Z)-eicosatetraenoyl-sn-glycero-3-phosphoethanolamine + a fatty acid + H(+). The catalysed reaction is 1-(9Z-octadecenoyl)-2-(7Z,10Z,13Z,16Z,19Z-docosapentaenoyl)-sn-glycero-3-phospho-1D-myo-inositol + H2O = 2-(7Z,10Z,13Z,16Z,19Z-docosapentaenoyl)-sn-glycero-3-phospho-1D-myo-inositol + (9Z)-octadecenoate + H(+). The enzyme catalyses 1-(9Z-octadecenoyl)-2-(5Z,8Z,11Z,14Z-eicosatetraenoyl)-sn-glycero-3-phospho-1D-myo-inositol + H2O = 2-(5Z,8Z,11Z,14Z-eicosatetraenoyl)-sn-glycero-3-phospho-(1D-myo-inositol) + (9Z)-octadecenoate + H(+). It carries out the reaction 1,2-di-(9Z-octadecenoyl)-sn-glycero-3-phospho-1D-myo-inositol + H2O = 2-(9Z-octadecenoyl)-sn-glycero-3-phospho-1D-myo-inositol + (9Z)-octadecenoate + H(+). It catalyses the reaction 1-(9Z-octadecenoyl)-2-(8Z,11Z,14Z-eicosatrienoyl)-sn-glycero-3-phospho-1D-myo-inositol + H2O = 2-(8Z,11Z,14Z-eicosatrienoyl)-sn-glycero-3-phospho-1D-myo-inositol + (9Z)-octadecenoate + H(+). The catalysed reaction is 1,2-di-(9Z-octadecenoyl)-sn-glycero-3-phosphocholine + H2O = (9Z-octadecenoyl)-sn-glycero-3-phosphocholine + (9Z)-octadecenoate + H(+). The protein operates within phospholipid metabolism; phosphatidylinositol metabolism. Its activity is regulated as follows. Phosphatidate (1,2-diacyl-sn-glycero-3-phosphate, PA) can positively regulate phospholipase A1 activity. Functionally, phospholipase A1 (PLA1) that hydrolyzes ester bonds at the sn-1 position of glycerophospholipids producing a free fatty acid and a lysophospholipid. Prefers phosphatidate (1,2-diacyl-sn-glycero-3-phosphate, PA) as substrate in vitro, but can efficiently hydrolyze phosphatidylinositol (1,2-diacyl-sn-glycero-3-phospho-(1D-myo-inositol), PI), as well as a range of other glycerophospholipid substrates such as phosphatidylcholine (1,2-diacyl-sn-glycero-3-phosphocholine, PC), phosphatidylethanolamine (1,2-diacyl-sn-glycero-3-phosphoethanolamine, PE), phosphatidylserine (1,2-diacyl-sn-glycero-3-phospho-L-serine, PS) and phosphatidylglycerol (1,2-diacyl-sn-glycero-3-phospho-(1'-sn-glycerol), PG). Involved in the regulation of the endogenous content of polyunsaturated PI and PS lipids in the nervous system. Changes in these lipids extend to downstream metabolic products like PI phosphates PIP and PIP2, which play fundamental roles in cell biology. Regulates mitochondrial morphology. These dynamic changes may be due to PA hydrolysis at the mitochondrial surface. May play a regulatory role in spermatogenesis or sperm function. In Homo sapiens (Human), this protein is Phospholipase DDHD1.